A 381-amino-acid polypeptide reads, in one-letter code: EPS I polysaccharide export outer membrane protein EpsA (381 aa).

The signal sequence occupies residues 1–23 (MFVSIPNIRKAVVSLSVVPLLAA). The N-palmitoyl cysteine moiety is linked to residue Cys-24. Cys-24 carries the S-diacylglycerol cysteine lipid modification.

It belongs to the BexD/CtrA/VexA family.

It is found in the cell outer membrane. Functionally, probably involved in polymerization and/or export of exopolysaccharide EPS I which functions as a virulence factor. The protein is EPS I polysaccharide export outer membrane protein EpsA (epsA) of Ralstonia nicotianae (strain ATCC BAA-1114 / GMI1000) (Ralstonia solanacearum).